A 1390-amino-acid polypeptide reads, in one-letter code: MAERANLFFHNKVIDGTAIKRIISRFIDHFGMAYTSHILDQVKTLGFHQATATSISLGIDDLLTIPSKGWLVQDAEQQSLILEKHHHYGNVHAIEKLRQSIEIWYATSEYLRQEMNPNFRMTEPFNPVHIMSFSGARGNASQVHQLVGMRGLMSDPQGQMIDLPIQSNLREGLSLTEYIISCYGARKGVVDTAVRTSDAGYLTRRLVEVVQHIVVRRTDCGTTRGISVSSRNGMIPERIFIQTLIGRVLADNIYMGLRCIATRNQDIGIGLVNRFITFRTQPISIRTPFTCRSTSWICRLCYGRSPTHGDLVELGEAVGIIAGQSIGEPGTQLTLRTFHTGGVFTGGTAEHVRAPSNGKIKFNKGLVHPTRTRHGHPAFLCSMDLYVTIESQDIIHNVTIPPKSFLLVQNDQYVESEQVIAEIRSGTYTLNFTERVRKHIYSDSEGEMHWSTDVYHASEFTYSNVHLLPKTSHLWILSGGSCRSSIVPFSLHKDQDQINVHSLSVERGYISNPSENNDKVKHKFFSSYLSSKSKKKSRILDYSDLNRIICTGFIYPTILHENSDLLAKRRKNRFIIPFQSIQEKELMSHSDILIEIPINGIFRRNSIFAYFDDPQYRRKSSGITKYVAIGVHSIVKKEDLVEYRGVKEFQPKYQMKVDRFFFIPEEVYILPESSSLMVRNNSIIGVDTQITLNTKSRVGGLIRIERKKKKMELKIFSGDIHFPRATDKISRYSGILIPPGTVKTNSKESKKVKNWIYVQRITPTKKKSFVLVRPVLIYERGDGINLERLFPPDLLQEKENLKLRIVNYILYGNGKPIQGISNTSIQLVRTCLVLNWNQDKKSSSIEEARVYFVEVSINGLIRDFLRIHLGKSRISYISRKRNDPSGLGLISDNGPDRTNINPFYSIYSKTRIPQSLKQNQGTISISTLLNRNMECQSLIILSSSNCFRMDPSNGVKSYNVIKESTKRDPIIPIRNLLGPLGTTLQIANFYSFYHLLTHNQISVIKYLKLDNLKLKQTSKVLKYYLMDENGRIVNHDPYSNNVLNPFKLNWYFLHHNYHHNYCEETFTIINLGQFICENVCMTKNGPRLKSGQVLIVHADSVILRLAKPYLATPGATVHGHYGEILYEGDTLVTFIYEKSRSGDITQGLPKVEQVLEVRSIDSISINLEKRVENWNECITRIVGIPWGFLIGAELTIVQSRISLVNKIQKVYRSQGVQIHNRHIEIIVRQITSKVLVSEDGMSNVFSPGELIGLLRAERAMRALEEAICYRTVFLGITRASLSTQSFISEASFQETARVLAKAALRGRIDWLKGLKENVVLGGMIPVGTGFKGLAHRSSQHKIIPFKIKKKNLFAGEMRDILFHHRELFDSCISKNFYNISEQSFIGFNDS.

Positions 220, 291, 298, and 301 each coordinate Zn(2+).

This sequence belongs to the RNA polymerase beta' chain family. RpoC2 subfamily. As to quaternary structure, in plastids the minimal PEP RNA polymerase catalytic core is composed of four subunits: alpha, beta, beta', and beta''. When a (nuclear-encoded) sigma factor is associated with the core the holoenzyme is formed, which can initiate transcription. The cofactor is Zn(2+).

The protein resides in the plastid. The protein localises to the chloroplast. It catalyses the reaction RNA(n) + a ribonucleoside 5'-triphosphate = RNA(n+1) + diphosphate. Its function is as follows. DNA-dependent RNA polymerase catalyzes the transcription of DNA into RNA using the four ribonucleoside triphosphates as substrates. This is DNA-directed RNA polymerase subunit beta'' from Populus alba (White poplar).